The sequence spans 510 residues: Probable cytochrome P450 312a1 (510 aa).

Cys455 is a heme binding site.

This sequence belongs to the cytochrome P450 family. The cofactor is heme.

It is found in the endoplasmic reticulum membrane. The protein localises to the microsome membrane. Functionally, may be involved in the metabolism of insect hormones and in the breakdown of synthetic insecticides. In Drosophila melanogaster (Fruit fly), this protein is Probable cytochrome P450 312a1 (Cyp312a1).